Reading from the N-terminus, the 304-residue chain is MAAFSVHILGCGSALPTTHHHPSSQVIDLRDKLYMIDCGEGVQRQFRHEKLHFGRLIHIFISHLHGDHCFGLPGFISTLGLLGRTGTLHVHGPEGIERFLSPILEQFCHRMPYQVEIHTIDASRHALVHEDKSVKVYSIPLSHRIPAVGYLFEEKCRARHLNKAAAEFYNIPLAEYPLIIEGSDYTTPDGRIIPNRHLTTPGTPPRRYAYCSDTEFCPSIVPIIQGVDLLYHEATFMEEDWARAKETFHSTAKEAAEIARQAGAKRLLIGHYSGRYKDVQGLLEEAQSVFKPTIAANERMRIDL.

Zn(2+) is bound by residues histidine 63, histidine 65, aspartate 67, histidine 68, histidine 143, aspartate 213, and histidine 271. The active-site Proton acceptor is aspartate 67.

This sequence belongs to the RNase Z family. As to quaternary structure, homodimer. Zn(2+) is required as a cofactor.

It catalyses the reaction Endonucleolytic cleavage of RNA, removing extra 3' nucleotides from tRNA precursor, generating 3' termini of tRNAs. A 3'-hydroxy group is left at the tRNA terminus and a 5'-phosphoryl group is left at the trailer molecule.. Zinc phosphodiesterase, which displays some tRNA 3'-processing endonuclease activity. Probably involved in tRNA maturation, by removing a 3'-trailer from precursor tRNA. The chain is Ribonuclease Z from Porphyromonas gingivalis (strain ATCC 33277 / DSM 20709 / CIP 103683 / JCM 12257 / NCTC 11834 / 2561).